The sequence spans 440 residues: MRLSEHIYRTISSIRGPLLFVERVFNARAGEIVRIVHPDGETVDGEVLKIEGETVLIQVFGETRGLGMDAPVAFTDGVKMAPLSPDMIGRVFDGSFHPIDGSPLFVPERWTPATGQPINPTARARPEEFIETGITAIDALNTLVKGQKLPVFSCAGLPSREVAAAVLQNARLAGGGEFVVVFVALGLTHHDYSFYMESLAEMKTGFVAFVNRADEPVVERLLAPRFGLAAAEFLAFNRGMDVLVLITDMTNYCDALREVSTAREELPGRRGYPGYMYSDLASLYERAGRIKGMAGSVTMLPVVTMPEDDITHPIPDLTGYITEGQIVLSRELHQKGVFPPVDVLPSLSRLMQRGIGAGHTRSDHRAIADRLYRHYAKGRDLRRLEAIVGREGMTAGDRVMLDFADAFERELIHQGSARRDINGSLDRGVELLKRFSLEAA.

The protein belongs to the ATPase alpha/beta chains family.

In terms of biological role, produces ATP from ADP in the presence of a proton gradient across the membrane. The V-type beta chain is a regulatory subunit. This chain is V-type ATP synthase beta chain, found in Geotalea uraniireducens (strain Rf4) (Geobacter uraniireducens).